A 66-amino-acid chain; its full sequence is Beta-toxin Ct71 (66 aa).

The LCN-type CS-alpha/beta domain maps to 1–66; the sequence is KEGYIVNYHD…VWPLPKKTCN (66 aa). 4 disulfides stabilise this stretch: C12–C65, C16–C41, C25–C46, and C29–C48. Residue N66 is modified to Asparagine amide.

Belongs to the long (4 C-C) scorpion toxin superfamily. Sodium channel inhibitor family. Beta subfamily. In terms of tissue distribution, expressed by the venom gland.

The protein localises to the secreted. In terms of biological role, beta toxins bind voltage-independently at site-4 of sodium channels (Nav) and shift the voltage of activation toward more negative potentials thereby affecting sodium channel activation and promoting spontaneous and repetitive firing. Lethal to mice. This is Beta-toxin Ct71 from Centruroides tecomanus (Scorpion).